The sequence spans 212 residues: Transcriptional repressor CcpN (212 aa).

An HTH deoR-type domain is found at 6–70 (LNKRQEHILQ…FYTGKTGTQL (65 aa)). Residues 23–42 (ITGEHIAEKLNLTRATLRPD) constitute a DNA-binding region (H-T-H motif). CBS domains lie at 83–139 (FQSI…QQEL) and 148–211 (MTRM…ENEI).

Its function is as follows. Transcription repressor that binds to the promoter of gapB and pckA genes, preventing their expression. Acts as a regulator for catabolite repression of gluconeogenic genes. In Bacillus subtilis (strain 168), this protein is Transcriptional repressor CcpN (ccpN).